Here is a 289-residue protein sequence, read N- to C-terminus: Formamidopyrimidine-DNA glycosylase (289 aa).

Pro2 serves as the catalytic Schiff-base intermediate with DNA. Glu3 serves as the catalytic Proton donor. The active-site Proton donor; for beta-elimination activity is the Lys60. DNA contacts are provided by His94, Arg126, and Arg167. Residues 252 to 287 form an FPG-type zinc finger; the sequence is QVYGKPAGTPCPRCGTGLARIRIAGRSSVFCPRCQP. Arg277 functions as the Proton donor; for delta-elimination activity in the catalytic mechanism.

It belongs to the FPG family. Monomer. The cofactor is Zn(2+).

The catalysed reaction is Hydrolysis of DNA containing ring-opened 7-methylguanine residues, releasing 2,6-diamino-4-hydroxy-5-(N-methyl)formamidopyrimidine.. It carries out the reaction 2'-deoxyribonucleotide-(2'-deoxyribose 5'-phosphate)-2'-deoxyribonucleotide-DNA = a 3'-end 2'-deoxyribonucleotide-(2,3-dehydro-2,3-deoxyribose 5'-phosphate)-DNA + a 5'-end 5'-phospho-2'-deoxyribonucleoside-DNA + H(+). In terms of biological role, involved in base excision repair of DNA damaged by oxidation or by mutagenic agents. Acts as a DNA glycosylase that recognizes and removes damaged bases. Has a preference for oxidized purines, such as 7,8-dihydro-8-oxoguanine (8-oxoG). Has AP (apurinic/apyrimidinic) lyase activity and introduces nicks in the DNA strand. Cleaves the DNA backbone by beta-delta elimination to generate a single-strand break at the site of the removed base with both 3'- and 5'-phosphates. The chain is Formamidopyrimidine-DNA glycosylase from Thermomicrobium roseum (strain ATCC 27502 / DSM 5159 / P-2).